The sequence spans 1079 residues: Tudor domain-containing protein 7 (1079 aa).

The 69-residue stretch at 1-69 (MLRAVLQANK…EVTCYAVACK (69 aa)) folds into the HTH OST-type 1 domain. Residues 109 to 132 (KPKITLRQPGFTPPQEMMIRKPVP) form a disordered region. 2 consecutive HTH OST-type domains span residues 218 to 288 (DLPV…YATT) and 330 to 398 (PKDE…YGKS). Tudor domains follow at residues 494-551 (PLRV…FYTL) and 684-741 (LPFC…LLRD).

The protein belongs to the TDRD7 family.

It localises to the cytoplasm. Its function is as follows. Component of specific cytoplasmic RNA granules involved in post-transcriptional regulation of specific genes: probably acts by binding to specific mRNAs and regulating their translation. Probably required during spermatogenesis. The polypeptide is Tudor domain-containing protein 7 (tdrd7) (Xenopus laevis (African clawed frog)).